A 179-amino-acid polypeptide reads, in one-letter code: Putative mediator of RNA polymerase II transcription subunit 28 (179 aa).

Positions 81–119 (SAEKNKIQLKQEIYKVKKEIENKDRLIERYKNKVKEWKY) form a coiled coil.

This sequence belongs to the Mediator complex subunit 28 family. As to quaternary structure, component of the Mediator complex.

It is found in the nucleus. Functionally, component of the Mediator complex, a coactivator involved in the regulated transcription of nearly all RNA polymerase II-dependent genes. Mediator functions as a bridge to convey information from gene-specific regulatory proteins to the basal RNA polymerase II transcription machinery. Mediator is recruited to promoters by direct interactions with regulatory proteins and serves as a scaffold for the assembly of a functional preinitiation complex with RNA polymerase II and the general transcription factors. The sequence is that of Putative mediator of RNA polymerase II transcription subunit 28 (med28) from Dictyostelium discoideum (Social amoeba).